A 221-amino-acid chain; its full sequence is Oxaloacetate tautomerase FAHD1, mitochondrial (221 aa).

Residues 1–24 (MAASRPLSRFWEWGKNIVCVGRNY) constitute a mitochondrion transit peptide. Ser37 carries the post-translational modification Phosphoserine. Residues Glu68, Glu70, and Asp99 each contribute to the Mg(2+) site. The residue at position 110 (Lys110) is an N6-acetyllysine. The residue at position 112 (Lys112) is an N6-succinyllysine.

This sequence belongs to the FAH family. In terms of assembly, homodimer. It depends on Mg(2+) as a cofactor. Mn(2+) is required as a cofactor.

It is found in the mitochondrion. The protein localises to the cytoplasm. The protein resides in the cytosol. It catalyses the reaction oxaloacetate = enol-oxaloacetate. It carries out the reaction oxaloacetate + H(+) = pyruvate + CO2. The catalysed reaction is a 3-acylpyruvate + H2O = a carboxylate + pyruvate + H(+). The enzyme catalyses acetylpyruvate + H2O = acetate + pyruvate + H(+). It catalyses the reaction 3-fumarylpyruvate + H2O = fumarate + pyruvate + H(+). Its activity is regulated as follows. Oxaloacetate decarboxylation is competitively inhibited by oxalate. Its function is as follows. Tautomerase that converts enol-oxaloacetate, a strong inhibitor of succinate dehydrogenase, to the physiological keto form of oxaloacetate. It is thereby required to maximize aerobic respiration efficiency by preventing succinate dehydrogenase inhibition. Also acts as a weak oxaloacetate decarboxylase (ODx), catalyzing the decarboxylation of oxaloacetate (OAA) to pyruvate and CO(2), and as such is likely a regulatory enzyme in the TCA cycle. Also displays acylpyruvase activity, being able to hydrolyze acetylpyruvate and fumarylpyruvate in vitro. This is Oxaloacetate tautomerase FAHD1, mitochondrial from Bos taurus (Bovine).